The primary structure comprises 404 residues: Cysteine desulfurase IscS (404 aa).

Residues 75–76 (AT), Asn-155, Gln-183, and 203–205 (SAH) contribute to the pyridoxal 5'-phosphate site. Lys-206 is modified (N6-(pyridoxal phosphate)lysine). Residue Thr-243 coordinates pyridoxal 5'-phosphate. Cys-328 acts as the Cysteine persulfide intermediate in catalysis. Position 328 (Cys-328) interacts with [2Fe-2S] cluster.

Belongs to the class-V pyridoxal-phosphate-dependent aminotransferase family. NifS/IscS subfamily. As to quaternary structure, homodimer. Forms a heterotetramer with IscU, interacts with other sulfur acceptors. Pyridoxal 5'-phosphate serves as cofactor.

The protein resides in the cytoplasm. It carries out the reaction (sulfur carrier)-H + L-cysteine = (sulfur carrier)-SH + L-alanine. It functions in the pathway cofactor biosynthesis; iron-sulfur cluster biosynthesis. Master enzyme that delivers sulfur to a number of partners involved in Fe-S cluster assembly, tRNA modification or cofactor biosynthesis. Catalyzes the removal of elemental sulfur atoms from cysteine to produce alanine. Functions as a sulfur delivery protein for Fe-S cluster synthesis onto IscU, an Fe-S scaffold assembly protein, as well as other S acceptor proteins. This Colwellia psychrerythraea (strain 34H / ATCC BAA-681) (Vibrio psychroerythus) protein is Cysteine desulfurase IscS.